We begin with the raw amino-acid sequence, 187 residues long: ECF RNA polymerase sigma factor SigK (187 aa).

A sigma-70 factor domain-2 region spans residues 30–96 (YDHTCTRVYG…RAVDRVRAEQ (67 aa)). An Interaction with polymerase core subunit RpoC motif is present at residues 53 to 56 (ETTQ). The tract at residues 133-182 (CLDGLTDTQRQCIELAYYGGLTYAEVSQRLATNLSTIKSRMRDALRGLRN) is sigma-70 factor domain-4. The segment at residues 155-174 (YAEVSQRLATNLSTIKSRMR) is a DNA-binding region (H-T-H motif).

It belongs to the sigma-70 factor family. ECF subfamily. As to quaternary structure, interacts transiently with the RNA polymerase catalytic core formed by RpoA, RpoB, RpoC and RpoZ (2 alpha, 1 beta, 1 beta' and 1 omega subunit) to form the RNA polymerase holoenzyme that can initiate transcription. Interacts (via sigma-70 factor domain 4) with anti-sigma-K factor RskA.

Functionally, sigma factors are initiation factors that promote the attachment of RNA polymerase to specific initiation sites and are then released. Extracytoplasmic function (ECF) sigma factors are held in an inactive form by an anti-sigma factor until released by regulated intramembrane proteolysis. The polypeptide is ECF RNA polymerase sigma factor SigK (sigK) (Mycobacterium ulcerans (strain Agy99)).